Reading from the N-terminus, the 307-residue chain is MWFKNLQLHRLPAPWAVTADRMEKWLAPHAFQPGSSVEMQRVGWASPRDDGALVYSINRQMLLVFRAEKKLLPASVVNQVTKARALELEEQQGFKVGRKQLRELKEQVTDELLPRAFSIRRDTRVWIDTANGWLVIDAAAQALADDVRSLLVKSIDGLPLAGVQVARSPVAAMTDWLLSGDAPGGFTVDQDAELRSSGEGGATVRYVGHALEANDMRRHIEAGKQCMRLAMTWDDRISFVLTPSLTIKRVTPLDVIKEAADPTAQNDDERFDSDFTLMTGELARMLTSLVDILGGDRQDSVPQPAAA.

It belongs to the RdgC family.

The protein localises to the cytoplasm. The protein resides in the nucleoid. Its function is as follows. May be involved in recombination. The sequence is that of Recombination-associated protein RdgC from Burkholderia cenocepacia (strain ATCC BAA-245 / DSM 16553 / LMG 16656 / NCTC 13227 / J2315 / CF5610) (Burkholderia cepacia (strain J2315)).